The chain runs to 314 residues: Taste receptor type 2 member 42 (314 aa).

Topologically, residues 1-7 (MATELDK) are extracellular. The helical transmembrane segment at 8–28 (IFLILAIAEFIISMLGNVFIG) threads the bilayer. Residues 29–50 (LVNCSEGIKNQKVFSADFILTC) lie on the Cytoplasmic side of the membrane. Residues 51–71 (LAISTIGQLLVILFDSFLVGL) traverse the membrane as a helical segment. Topologically, residues 72–101 (ASHLYTTYRLGKTVIMLWHMTNHLTTWLAT) are extracellular. A helical membrane pass occupies residues 102 to 122 (CLSIFYFFKIAHFPHSLFLWL). At 123-127 (RWRMN) the chain is on the cytoplasmic side. Residues 128–148 (GMIVMLLILSLFLLIFDSLVL) traverse the membrane as a helical segment. Residues 149–187 (EIFIDISLNIIDKSNLTLYLDESKTLYDKLSILKTLLSL) are Extracellular-facing. N-linked (GlcNAc...) asparagine glycosylation occurs at N163. A helical transmembrane segment spans residues 188–208 (TSFIPFSLFLTSLLFLFLSLV). The Cytoplasmic segment spans residues 209 to 238 (RHTRNLKLSSLGSRDSSTEAHRRAMKMVMS). Residues 239–259 (FLFLFIVHFFSLQVANWIFFM) traverse the membrane as a helical segment. At 260–265 (LWNNKC) the chain is on the extracellular side. Residues 266–286 (IKFVMLALNAFPSCHSFILIL) form a helical membrane-spanning segment. The Cytoplasmic portion of the chain corresponds to 287–314 (GNSKLQQTAVRLLWHLRNYTKTPNPLPL).

The protein belongs to the G-protein coupled receptor T2R family.

It localises to the membrane. In terms of biological role, receptor that may play a role in the perception of bitterness and is gustducin-linked. May play a role in sensing the chemical composition of the gastrointestinal content. The activity of this receptor may stimulate alpha gustducin, mediate PLC-beta-2 activation and lead to the gating of TRPM5. In Homo sapiens (Human), this protein is Taste receptor type 2 member 42 (TAS2R42).